Consider the following 508-residue polypeptide: Transcriptional regulatory protein moc3 (508 aa).

Residues 15–43 are disordered; the sequence is NRTGSINSNPLYIPNPNVEPTPKPTKRRT. A DNA-binding region (zn(2)-C6 fungal-type) is located at residues 46–76; it reads GCLTCRRRRIKCDETKPFCLNCTKTNRECEG. Disordered regions lie at residues 110–146 and 174–193; these read ASSS…STVT and NHNV…KPSV. Low complexity predominate over residues 176 to 193; that stretch reads NVPTNNSSSATSSTKPSV.

Interacts with zfs1.

The protein resides in the nucleus. Its function is as follows. Induces sexual development and ascus formation. Also involved in calcium homeostasis. The protein is Transcriptional regulatory protein moc3 (moc3) of Schizosaccharomyces pombe (strain 972 / ATCC 24843) (Fission yeast).